The chain runs to 254 residues: 3-dehydroquinate dehydratase (254 aa).

3-dehydroquinate contacts are provided by residues 47-49 (EWR) and R83. The active-site Proton donor/acceptor is H144. The active-site Schiff-base intermediate with substrate is the K171. 3 residues coordinate 3-dehydroquinate: R214, S233, and Q237.

The protein belongs to the type-I 3-dehydroquinase family. As to quaternary structure, homodimer.

It catalyses the reaction 3-dehydroquinate = 3-dehydroshikimate + H2O. Its pathway is metabolic intermediate biosynthesis; chorismate biosynthesis; chorismate from D-erythrose 4-phosphate and phosphoenolpyruvate: step 3/7. In terms of biological role, involved in the third step of the chorismate pathway, which leads to the biosynthesis of aromatic amino acids. Catalyzes the cis-dehydration of 3-dehydroquinate (DHQ) and introduces the first double bond of the aromatic ring to yield 3-dehydroshikimate. This Bacillus licheniformis (strain ATCC 14580 / DSM 13 / JCM 2505 / CCUG 7422 / NBRC 12200 / NCIMB 9375 / NCTC 10341 / NRRL NRS-1264 / Gibson 46) protein is 3-dehydroquinate dehydratase.